A 394-amino-acid chain; its full sequence is MNKYKRIFLVVMDSVGIGEAPDAEQFGDLGSDTIGHIAEHMNGLQMPNMVKLGLGNIREMKGISKVEKPLGYYTKMQEKSTGKDTMTGHWEIMGLYIDTPFQVFPEGFPKELLDELEEKTGRKIIGNKPASGTEILDELGQEQMETGSLIVYTSADSVLQIAAHEEVVPLDELYKICKIARELTLDEKYMVGRVIARPFVGEPGNFTRTPNRHDYALKPFGRTVMNELKDSDYDVIAIGKISDIYDGEGVTESLRTKSNMDGMDKLVDTLNMDFTGLSFLNLVDFDALFGHRRDPQGYGEALQEYDARLPEVFAKLKEDDLLLITADHGNDPIHPGTDHTREYVPLLAYSPSMKEGGQELPLRQTFADIGATVAENFGVKMPEYGTSFLNELKK.

Mn(2+)-binding residues include D13, D286, H291, D327, H328, and H339.

The protein belongs to the phosphopentomutase family. Mn(2+) is required as a cofactor.

The protein localises to the cytoplasm. The enzyme catalyses 2-deoxy-alpha-D-ribose 1-phosphate = 2-deoxy-D-ribose 5-phosphate. It carries out the reaction alpha-D-ribose 1-phosphate = D-ribose 5-phosphate. It functions in the pathway carbohydrate degradation; 2-deoxy-D-ribose 1-phosphate degradation; D-glyceraldehyde 3-phosphate and acetaldehyde from 2-deoxy-alpha-D-ribose 1-phosphate: step 1/2. In terms of biological role, isomerase that catalyzes the conversion of deoxy-ribose 1-phosphate (dRib-1-P) and ribose 1-phosphate (Rib-1-P) to deoxy-ribose 5-phosphate (dRib-5-P) and ribose 5-phosphate (Rib-5-P), respectively. The chain is Phosphopentomutase from Bacillus cereus (strain B4264).